A 63-amino-acid chain; its full sequence is Chromatin protein Cren7 (63 aa).

This sequence belongs to the Cren7 family. Monomer. Post-translationally, methylated at multiple sites, to varying extents.

The protein resides in the chromosome. The protein localises to the cytoplasm. A chromatin protein, binds double-stranded DNA without sequence specificity. Constrains negative DNA supercoils. This Pyrobaculum calidifontis (strain DSM 21063 / JCM 11548 / VA1) protein is Chromatin protein Cren7.